Consider the following 64-residue polypeptide: Large ribosomal subunit protein bL35 (64 aa).

The segment covering 1-26 (MPKMKSHRGASKRFKRTASGKLKRGR) has biased composition (basic residues). Disordered stretches follow at residues 1-28 (MPKMKSHRGASKRFKRTASGKLKRGRAY) and 33-52 (FGNKSTKAKRKLRKASMVSS).

The protein belongs to the bacterial ribosomal protein bL35 family.

This Exiguobacterium sibiricum (strain DSM 17290 / CCUG 55495 / CIP 109462 / JCM 13490 / 255-15) protein is Large ribosomal subunit protein bL35.